The sequence spans 374 residues: Retron Eco8 reverse transcriptase (374 aa).

The Reverse transcriptase domain maps to 25–252; sequence ENIITQSAIP…KEISINGYVI (228 aa). Residues Asp107, Asp200, and Asp201 each contribute to the Mg(2+) site.

Belongs to the bacterial reverse transcriptase family.

It carries out the reaction DNA(n) + a 2'-deoxyribonucleoside 5'-triphosphate = DNA(n+1) + diphosphate. In terms of biological role, reverse transcriptase (RT) component of antiviral defense system retron Eco8, composed of this RT, the following endonuclease and a non-coding RNA (ncRNA) encoded between them. Expression of retron Eco8 confers protection against bacteriophages T4, T6, T7 and SECphi4, SECphi6 and SECphi18. At multiplicity of infection (MOI) of 0.02 cultures slow growth when infected with SECphi4 but do not collapse, at MOI 2 cultures collapse. Responsible for synthesis of msDNA (a branched molecule with RNA linked by a 2',5'-phosphodiester bond to ssDNA). The retron transcript serves as primer (from a conserved internal G residue) and template for the reaction, and codes for the RT. The sequence is that of Retron Eco8 reverse transcriptase from Escherichia coli.